The primary structure comprises 252 residues: Triosephosphate isomerase (252 aa).

Substrate is bound at residue 10–12 (NWK). His-96 acts as the Electrophile in catalysis. Glu-168 (proton acceptor) is an active-site residue. Residues Gly-174, Ser-213, and 234–235 (GG) each bind substrate.

The protein belongs to the triosephosphate isomerase family. In terms of assembly, homodimer.

Its subcellular location is the cytoplasm. It catalyses the reaction D-glyceraldehyde 3-phosphate = dihydroxyacetone phosphate. It functions in the pathway carbohydrate biosynthesis; gluconeogenesis. The protein operates within carbohydrate degradation; glycolysis; D-glyceraldehyde 3-phosphate from glycerone phosphate: step 1/1. Involved in the gluconeogenesis. Catalyzes stereospecifically the conversion of dihydroxyacetone phosphate (DHAP) to D-glyceraldehyde-3-phosphate (G3P). This chain is Triosephosphate isomerase, found in Nitrosomonas eutropha (strain DSM 101675 / C91 / Nm57).